The following is a 343-amino-acid chain: Heat-inducible transcription repressor HrcA (343 aa).

The protein belongs to the HrcA family.

Functionally, negative regulator of class I heat shock genes (grpE-dnaK-dnaJ and groELS operons). Prevents heat-shock induction of these operons. The protein is Heat-inducible transcription repressor HrcA of Mycobacterium tuberculosis (strain ATCC 25177 / H37Ra).